A 217-amino-acid chain; its full sequence is 3-oxoadipate CoA-transferase subunit B (217 aa).

The active site involves Glu50.

It belongs to the 3-oxoacid CoA-transferase subunit B family. Heterodimer.

It carries out the reaction 3-oxoadipate + succinyl-CoA = 3-oxoadipyl-CoA + succinate. Its pathway is aromatic compound metabolism; beta-ketoadipate pathway; acetyl-CoA and succinyl-CoA from 3-oxoadipate: step 1/2. The sequence is that of 3-oxoadipate CoA-transferase subunit B (pcaJ) from Acinetobacter baylyi (strain ATCC 33305 / BD413 / ADP1).